Consider the following 101-residue polypeptide: Putative antitoxin HigA2 (101 aa).

Residues 35–90 (LRELRAAQSLTQVQVAALAHIRQSRVSSIENGDIGSAQVNTLRKYVSALGGELDIT) form the HTH cro/C1-type domain. The H-T-H motif DNA-binding region spans 46–65 (QVQVAALAHIRQSRVSSIEN).

In terms of biological role, putative antitoxin component of a type II toxin-antitoxin (TA) system. Its cognate toxin would be HigB2. This is Putative antitoxin HigA2 from Mycobacterium tuberculosis (strain ATCC 25618 / H37Rv).